The primary structure comprises 132 residues: Small ribosomal subunit protein uS8 (132 aa).

This sequence belongs to the universal ribosomal protein uS8 family. In terms of assembly, part of the 30S ribosomal subunit. Contacts proteins S5 and S12.

Functionally, one of the primary rRNA binding proteins, it binds directly to 16S rRNA central domain where it helps coordinate assembly of the platform of the 30S subunit. The sequence is that of Small ribosomal subunit protein uS8 from Afipia carboxidovorans (strain ATCC 49405 / DSM 1227 / KCTC 32145 / OM5) (Oligotropha carboxidovorans).